The sequence spans 433 residues: V-type ATP synthase beta chain (433 aa).

The protein belongs to the ATPase alpha/beta chains family.

Produces ATP from ADP in the presence of a proton gradient across the membrane. The V-type beta chain is a regulatory subunit. This is V-type ATP synthase beta chain from Borrelia turicatae (strain 91E135).